Consider the following 140-residue polypeptide: Small ribosomal subunit protein uS12 (140 aa).

Asp102 carries the 3-methylthioaspartic acid modification. A disordered region spans residues 121-140 (ANRQQSRSKYGAKKPKAAKK). Positions 130–140 (YGAKKPKAAKK) are enriched in basic residues.

Belongs to the universal ribosomal protein uS12 family. In terms of assembly, part of the 30S ribosomal subunit. Contacts proteins S8 and S17. May interact with IF1 in the 30S initiation complex.

Its function is as follows. With S4 and S5 plays an important role in translational accuracy. Interacts with and stabilizes bases of the 16S rRNA that are involved in tRNA selection in the A site and with the mRNA backbone. Located at the interface of the 30S and 50S subunits, it traverses the body of the 30S subunit contacting proteins on the other side and probably holding the rRNA structure together. The combined cluster of proteins S8, S12 and S17 appears to hold together the shoulder and platform of the 30S subunit. In Alkaliphilus oremlandii (strain OhILAs) (Clostridium oremlandii (strain OhILAs)), this protein is Small ribosomal subunit protein uS12.